We begin with the raw amino-acid sequence, 305 residues long: Acyl transferase (305 aa).

Residues Ser116, Asp213, and His243 each act as charge relay system in the active site.

This sequence belongs to the LuxD family.

The protein operates within lipid metabolism; fatty acid reduction for biolumincescence. Acyl transferase is part of the fatty acid reductase system required for aldehyde biosynthesis; it produces fatty acids for the luminescent reaction. In Shewanella woodyi (strain ATCC 51908 / MS32), this protein is Acyl transferase.